A 127-amino-acid chain; its full sequence is Methylglyoxal synthase (127 aa).

Positions 1–127 constitute an MGS-like domain; the sequence is MEKKIALIAH…IKGLESLILR (127 aa). Residues H10, K14, 36–39, and 56–57 each bind substrate; these read TGTT and SG. D62 (proton donor/acceptor) is an active-site residue. Position 89 (H89) interacts with substrate.

The protein belongs to the methylglyoxal synthase family.

It catalyses the reaction dihydroxyacetone phosphate = methylglyoxal + phosphate. Its function is as follows. Catalyzes the formation of methylglyoxal from dihydroxyacetone phosphate. The sequence is that of Methylglyoxal synthase from Borreliella afzelii (strain PKo) (Borrelia afzelii).